Here is a 908-residue protein sequence, read N- to C-terminus: Protein translocase subunit SecA (908 aa).

ATP contacts are provided by residues glutamine 87, 105-109 (GEGKT), and aspartate 511. Residues 559-570 (ERHESRRIDNQL) are compositionally biased toward basic and acidic residues. Disordered stretches follow at residues 559 to 582 (ERHE…DPGS) and 841 to 908 (RRRR…GRLE). Over residues 847 to 856 (LAQQMQRAQA) the composition is skewed to low complexity. A compositionally biased stretch (acidic residues) spans 862-873 (TEEDSDAEEQAE). Zn(2+) contacts are provided by cysteine 892, cysteine 894, cysteine 903, and histidine 904. The span at 898 to 908 (KKYKQCHGRLE) shows a compositional bias: basic residues.

The protein belongs to the SecA family. As to quaternary structure, monomer and homodimer. Part of the essential Sec protein translocation apparatus which comprises SecA, SecYEG and auxiliary proteins SecDF-YajC and YidC. Zn(2+) serves as cofactor.

The protein resides in the cell inner membrane. The protein localises to the cytoplasm. It carries out the reaction ATP + H2O + cellular proteinSide 1 = ADP + phosphate + cellular proteinSide 2.. Functionally, part of the Sec protein translocase complex. Interacts with the SecYEG preprotein conducting channel. Has a central role in coupling the hydrolysis of ATP to the transfer of proteins into and across the cell membrane, serving both as a receptor for the preprotein-SecB complex and as an ATP-driven molecular motor driving the stepwise translocation of polypeptide chains across the membrane. In Hahella chejuensis (strain KCTC 2396), this protein is Protein translocase subunit SecA.